Consider the following 482-residue polypeptide: UDP-sulfoquinovose synthase, chloroplastic (482 aa).

Residues M1–R61 constitute a chloroplast transit peptide. Residues Y100–C101, D120–R124, D163–I164, R189, and N207 contribute to the NAD(+) site. Position 189 (R189) interacts with substrate. Positions 233 and 270 each coordinate substrate. Residue T233 is part of the active site. Y270 and K274 together coordinate NAD(+). The Proton acceptor role is filled by Y270. K274 is an active-site residue. Q297 contacts substrate. V300 contributes to the NAD(+) binding site. Residues A327–R330, T342–Y344, and R415–E417 each bind substrate.

The protein belongs to the NAD(P)-dependent epimerase/dehydratase family. Homodimer. Interacts with FdGOGAT (via FMN-binding domain). It depends on NAD(+) as a cofactor. In terms of processing, the N-terminus is blocked.

It localises to the plastid. The protein localises to the chloroplast stroma. It carries out the reaction sulfite + UDP-alpha-D-glucose + H(+) = UDP-alpha-D-6-sulfoquinovose + H2O. Involved in the biosynthesis of sulfolipids found in thylakoid membranes. Converts UDP-glucose and sulfite to the sulfolipid head group precursor UDP-sulfoquinovose. The sulfite is delivered to the reaction center by the FMN-binding domain of FdGOGAT. The polypeptide is UDP-sulfoquinovose synthase, chloroplastic (SQD1) (Spinacia oleracea (Spinach)).